The chain runs to 394 residues: Ornithine aminotransferase 1 (394 aa).

At Lys252 the chain carries N6-(pyridoxal phosphate)lysine.

Belongs to the class-III pyridoxal-phosphate-dependent aminotransferase family. OAT subfamily. The cofactor is pyridoxal 5'-phosphate.

It is found in the cytoplasm. The enzyme catalyses a 2-oxocarboxylate + L-ornithine = L-glutamate 5-semialdehyde + an L-alpha-amino acid. It functions in the pathway amino-acid biosynthesis; L-proline biosynthesis; L-glutamate 5-semialdehyde from L-ornithine: step 1/1. Functionally, catalyzes the interconversion of ornithine to glutamate semialdehyde. The polypeptide is Ornithine aminotransferase 1 (Staphylococcus saprophyticus subsp. saprophyticus (strain ATCC 15305 / DSM 20229 / NCIMB 8711 / NCTC 7292 / S-41)).